The sequence spans 50 residues: Acidic phospholipase A2 1 (50 aa).

Residues tyrosine 27, glycine 29, and glycine 31 each contribute to the Ca(2+) site. Residues cysteine 28 and cysteine 44 are joined by a disulfide bond. Histidine 47 is an active-site residue. Aspartate 48 lines the Ca(2+) pocket.

The protein belongs to the phospholipase A2 family. Group II subfamily. D49 sub-subfamily. As to quaternary structure, monomer. Ca(2+) is required as a cofactor. Expressed by the venom gland.

It localises to the secreted. It carries out the reaction a 1,2-diacyl-sn-glycero-3-phosphocholine + H2O = a 1-acyl-sn-glycero-3-phosphocholine + a fatty acid + H(+). Its function is as follows. Snake venom phospholipase A2 (PLA2) that displays a potent enzymatic activity as measured by indirect hemolysis of red blood cells. Is neither lethal when injected into mice nor does it present anticoagulant activity. Displays a moderate inhibitory activity on the aggregation of platelets induced by low levels of ADP, thrombin and arachidonate. In contrast, strongly inhibits platelet aggregation induced by high doses of collagen. Shows myotoxic activity, increases the plasma creatine-kinase activity and induces edema and myonecrosis of mouse skeletal muscles. PLA2 catalyzes the calcium-dependent hydrolysis of the 2-acyl groups in 3-sn-phosphoglycerides. This is Acidic phospholipase A2 1 from Lachesis muta muta (Bushmaster).